A 350-amino-acid polypeptide reads, in one-letter code: D-guloside 3-dehydrogenase (350 aa).

It belongs to the zinc-containing alcohol dehydrogenase family. Zn(2+) serves as cofactor.

It carries out the reaction a D-guloside + NAD(+) = a 3-dehydro-D-guloside + NADH + H(+). Its function is as follows. Catalyzes the NAD(+)-dependent oxidation of the hydroxyl group at C3 of D-gulosides leading to 3-dehydro-D-gulosides. Probably functions in a metabolic pathway that transforms D-gulosides to D-glucosides. Is also able to catalyze the reverse reactions, i.e. the NADH-dependent reduction of the oxo group at C3 of 3-dehydro-D-gulosides leading to D-gulosides. In vitro, can oxidize D-gulose and methyl beta-D-guloside, and reduce methyl alpha-3-dehydro-D-guloside and methyl beta-3-dehydro-D-guloside. However, the actual specific physiological substrates for this metabolic pathway are unknown. The chain is D-guloside 3-dehydrogenase (ycjQ) from Shigella flexneri.